The sequence spans 107 residues: Putative double-stranded DNA mimic protein PC1_1990 (107 aa).

Belongs to the putative dsDNA mimic protein family.

May act as a double-stranded DNA (dsDNA) mimic. Probably regulates the activity of a dsDNA-binding protein. In Pectobacterium carotovorum subsp. carotovorum (strain PC1), this protein is Putative double-stranded DNA mimic protein PC1_1990.